A 211-amino-acid chain; its full sequence is MYQPDFPPVPFRLGLYPVVDSVAWIERLLEAGVRTLQLRIKDRRDSEVEDDVIAAIALGRRYHARLFINDYWQLAIKHQAYGVHLGQEDLETTDLSAIRQAGLRLGVSTHDDMEIDVALAARPSYIALGHVFPTQTKQMPSAPQGLEQLARHIQRLADYPTVAIGGISLEKAPGVLATGVGSIAVVSAITQAADWRAATDQLLALAGAGDE.

4-amino-2-methyl-5-(diphosphooxymethyl)pyrimidine-binding positions include 37 to 41 (QLRIK) and asparagine 69. Mg(2+)-binding residues include aspartate 70 and aspartate 89. Serine 108 contributes to the 4-amino-2-methyl-5-(diphosphooxymethyl)pyrimidine binding site. 134–136 (TQT) serves as a coordination point for 2-[(2R,5Z)-2-carboxy-4-methylthiazol-5(2H)-ylidene]ethyl phosphate. Lysine 137 provides a ligand contact to 4-amino-2-methyl-5-(diphosphooxymethyl)pyrimidine. 2-[(2R,5Z)-2-carboxy-4-methylthiazol-5(2H)-ylidene]ethyl phosphate is bound by residues glycine 166 and 186-187 (VS).

Belongs to the thiamine-phosphate synthase family. Requires Mg(2+) as cofactor.

The catalysed reaction is 2-[(2R,5Z)-2-carboxy-4-methylthiazol-5(2H)-ylidene]ethyl phosphate + 4-amino-2-methyl-5-(diphosphooxymethyl)pyrimidine + 2 H(+) = thiamine phosphate + CO2 + diphosphate. The enzyme catalyses 2-(2-carboxy-4-methylthiazol-5-yl)ethyl phosphate + 4-amino-2-methyl-5-(diphosphooxymethyl)pyrimidine + 2 H(+) = thiamine phosphate + CO2 + diphosphate. It catalyses the reaction 4-methyl-5-(2-phosphooxyethyl)-thiazole + 4-amino-2-methyl-5-(diphosphooxymethyl)pyrimidine + H(+) = thiamine phosphate + diphosphate. Its pathway is cofactor biosynthesis; thiamine diphosphate biosynthesis; thiamine phosphate from 4-amino-2-methyl-5-diphosphomethylpyrimidine and 4-methyl-5-(2-phosphoethyl)-thiazole: step 1/1. Its function is as follows. Condenses 4-methyl-5-(beta-hydroxyethyl)thiazole monophosphate (THZ-P) and 2-methyl-4-amino-5-hydroxymethyl pyrimidine pyrophosphate (HMP-PP) to form thiamine monophosphate (TMP). This Klebsiella pneumoniae subsp. pneumoniae (strain ATCC 700721 / MGH 78578) protein is Thiamine-phosphate synthase.